Here is a 409-residue protein sequence, read N- to C-terminus: Casein kinase II subunit alpha-1 (409 aa).

An N-terminal signal peptide occupies residues 1 to 35 (MIDTLFFLFFLFFDSPLRRLLLLCAVLALRAPTAH). An N-linked (GlcNAc...) asparagine glycan is attached at N72. Residues 110–395 (YEVVRKVGRG…AKEAMAHAYF (286 aa)) form the Protein kinase domain. ATP is bound by residues 116-124 (VGRGKYSEV) and K139. N-linked (GlcNAc...) asparagine glycosylation occurs at N188. Residue D227 is the Proton acceptor of the active site.

It belongs to the protein kinase superfamily. Ser/Thr protein kinase family. CK2 subfamily. As to quaternary structure, heterotetramer of two catalytic alpha subunits and two regulatory beta subunits. Seems to be present in all plant organs. But seems to be less expressed than CKA2.

It localises to the nucleus. It is found in the nucleolus. It catalyses the reaction L-seryl-[protein] + ATP = O-phospho-L-seryl-[protein] + ADP + H(+). The catalysed reaction is L-threonyl-[protein] + ATP = O-phospho-L-threonyl-[protein] + ADP + H(+). Inhibited by heparin. Its function is as follows. Casein kinases are operationally defined by their preferential utilization of acidic proteins such as caseins as substrates. Phosphorylates casein in vitro. The alpha chain contains the catalytic site. The tetrameric holoenzyme CK2, composed of two alpha and two beta subunits, phosphorylates the transcription factor GBFl, resulting in stimulation of its DNA binding activity. CK2 phosphorylates the transcription factor PIF1 after an exposure to light, resulting in a proteasome-dependent degradation of PIF1 and promotion of photomorphogenesis. CK2 phosphorylates translation initiation factors. May participate in the regulation of the initiation of translation. Acts as a circadian clock component that maintains the correct period length through phosphorylation of CCA1. Required for the maintenance and control of genomic stability and chromatin structure. May act as an ectokinase that phosphorylates several extracellular proteins. The polypeptide is Casein kinase II subunit alpha-1 (Arabidopsis thaliana (Mouse-ear cress)).